We begin with the raw amino-acid sequence, 158 residues long: 2-C-methyl-D-erythritol 2,4-cyclodiphosphate synthase (158 aa).

A divalent metal cation is bound by residues aspartate 9 and histidine 11. Residues 9–11 (DVH) and 35–36 (HS) each bind 4-CDP-2-C-methyl-D-erythritol 2-phosphate. Histidine 43 contacts a divalent metal cation. 4-CDP-2-C-methyl-D-erythritol 2-phosphate-binding positions include 57-59 (DIG), 62-66 (FPDTD), 101-107 (AQKPKMA), 133-136 (TTTE), phenylalanine 140, and arginine 143.

Belongs to the IspF family. In terms of assembly, homotrimer. A divalent metal cation is required as a cofactor.

The enzyme catalyses 4-CDP-2-C-methyl-D-erythritol 2-phosphate = 2-C-methyl-D-erythritol 2,4-cyclic diphosphate + CMP. It functions in the pathway isoprenoid biosynthesis; isopentenyl diphosphate biosynthesis via DXP pathway; isopentenyl diphosphate from 1-deoxy-D-xylulose 5-phosphate: step 4/6. Functionally, involved in the biosynthesis of isopentenyl diphosphate (IPP) and dimethylallyl diphosphate (DMAPP), two major building blocks of isoprenoid compounds. Catalyzes the conversion of 4-diphosphocytidyl-2-C-methyl-D-erythritol 2-phosphate (CDP-ME2P) to 2-C-methyl-D-erythritol 2,4-cyclodiphosphate (ME-CPP) with a corresponding release of cytidine 5-monophosphate (CMP). This is 2-C-methyl-D-erythritol 2,4-cyclodiphosphate synthase from Bacillus cereus (strain B4264).